Here is a 493-residue protein sequence, read N- to C-terminus: Reticulophagy regulator 1 (493 aa).

Residues 1 to 52 (MASPAPPEPAEQGSPALAAAPQAPPPPTRAPPEEPEGAAPPEEGAAAGAGRQ) are disordered. At 1–55 (MASPAPPEPAEQGSPALAAAPQAPPPPTRAPPEEPEGAAPPEEGAAAGAGRQVEE) the chain is on the cytoplasmic side. Low complexity predominate over residues 37–52 (GAAPPEEGAAAGAGRQ). The chain crosses the membrane as a helical span at residues 56–76 (AAGGVAAVVTWLLGEPALWLG). At 77–87 (GRADELLSWKR) the chain is on the lumenal side. The reticulon homology domain stretch occupies residues 80 to 229 (DELLSWKRPL…LLCAFLCPLF (150 aa)). A helical membrane pass occupies residues 88–108 (PLHSLLAFVGANLVFWFLALT). Residues 109 to 114 (PWRVYH) lie on the Cytoplasmic side of the membrane. Residues 115-135 (LISVMILTRVIMQIIKDMILS) traverse the membrane as a helical segment. Topologically, residues 136–204 (RTRGAQLWRS…LVCSVCTFFT (69 aa)) are lumenal. At Ser145 the chain carries Phosphoserine. Ser147 is subject to Phosphoserine; by CAMK2B. The residue at position 149 (Ser149) is a Phosphoserine. A helical transmembrane segment spans residues 205-225 (ILGSYIPGVILSYLLLLCAFL). The Cytoplasmic portion of the chain corresponds to 226–493 (CPLFKCNDIG…GFLSNLLGGH (268 aa)). Residues 315 to 326 (FNLSEGYTPQTD) are compositionally biased toward polar residues. 2 disordered regions span residues 315–394 (FNLS…GLSL) and 435–493 (AAPS…LGGH). Residues 330 to 344 (DLDRPSEEVFSRDLS) show a composition bias toward basic and acidic residues. Thr353 is subject to Phosphothreonine. Basic and acidic residues predominate over residues 368-388 (ELKRKKEQLDGGPRRSTEKKS). Residues 441 to 463 (EDTDTEEGDDFELLDQSELDQIE) are compositionally biased toward acidic residues. Residues 449 to 454 (DDFELL) carry the LIR motif motif. Positions 467–486 (GLSQDQEAEAQQNKKSSGFL) are enriched in polar residues.

This sequence belongs to the RETREG family. In terms of assembly, homooligomer; oligomerization is enhanced following endoplasmic reticulum stress and is mediated by the reticulon homology domain. Interacts with ATG8 family modifier proteins MAP1LC3A, MAP1LC3B, GABARAP, GABARAPL1 and GABARAPL2. Phosphorylation at Ser-147 by CAMK2B enhances oligomerization and membrane scission and reticulophagy activity.

Its subcellular location is the golgi apparatus. The protein resides in the cis-Golgi network membrane. It localises to the endoplasmic reticulum membrane. Functionally, endoplasmic reticulum (ER)-anchored autophagy regulator which mediates ER delivery into lysosomes through sequestration into autophagosomes. Promotes membrane remodeling and ER scission via its membrane bending capacity and targets the fragments into autophagosomes via interaction with ATG8 family proteins. Active under basal conditions. Required for collagen quality control in a LIR motif-dependent manner. Required for long-term survival of nociceptive and autonomic ganglion neurons. This is Reticulophagy regulator 1 (RETREG1) from Bos taurus (Bovine).